Consider the following 356-residue polypeptide: sn-glycerol-3-phosphate import ATP-binding protein UgpC (356 aa).

The ABC transporter domain maps to 4–235 (LKLQAVTKSW…PASRFVASFI (232 aa)). 37–44 (GPSGCGKS) contacts ATP.

It belongs to the ABC transporter superfamily. sn-glycerol-3-phosphate importer (TC 3.A.1.1.3) family. As to quaternary structure, the complex is composed of two ATP-binding proteins (UgpC), two transmembrane proteins (UgpA and UgpE) and a solute-binding protein (UgpB).

The protein resides in the cell inner membrane. It catalyses the reaction sn-glycerol 3-phosphate(out) + ATP + H2O = sn-glycerol 3-phosphate(in) + ADP + phosphate + H(+). Its function is as follows. Part of the ABC transporter complex UgpBAEC involved in sn-glycerol-3-phosphate (G3P) import. Responsible for energy coupling to the transport system. The sequence is that of sn-glycerol-3-phosphate import ATP-binding protein UgpC from Salmonella choleraesuis (strain SC-B67).